Consider the following 410-residue polypeptide: MLSAISKVSTLKSCTRYLTKCNYHASAKLLAVKTFSMPAMSPTMEKGGIVSWKYKVGEPFSAGDVILEVETDKSQIDVEALDDGKLAKILKDEGSKDVDVGEPIAYIADVDDDLATIKLPQEANTANAKSIEIKKPSADSTEATQQHLKKATVTPIKTVDGSQANLEQTLLPSVSLLLAENNISKQKALKEIAPSGSNGRLLKGDVLAYLGKIPQDSVNKVTEFIKKNERLDLSNIKPIQLKPKIAEQAQTKAADKPKITPVEFEEQLVFHAPASIPFDKLSESLNSFMKEAYQFSHGTPLMDTNSKYFDPIFEDLVTLSPREPRFKFSYDLMQIPKANNMQDTYGQEDIFDLLTGSDATASSVRPVEKNLPEKNEYILALNVSVNNKKFNDAEAKAKRFLDYVRELESF.

The transit peptide at 1–30 (MLSAISKVSTLKSCTRYLTKCNYHASAKLL) directs the protein to the mitochondrion. The Lipoyl-binding domain maps to 32 to 108 (VKTFSMPAMS…DVGEPIAYIA (77 aa)). Lysine 73 carries the N6-lipoyllysine modification. The region spanning 169–210 (TLLPSVSLLLAENNISKQKALKEIAPSGSNGRLLKGDVLAYL) is the Peripheral subunit-binding (PSBD) domain.

The protein belongs to the 2-oxoacid dehydrogenase family. As to quaternary structure, eukaryotic pyruvate dehydrogenase (PDH) complexes are organized as a core consisting of the oligomeric dihydrolipoamide acetyl-transferase (E2), around which are arranged multiple copies of pyruvate dehydrogenase (E1), dihydrolipoamide dehydrogenase (E3) and protein X (E3BP) bound by non-covalent bonds.

It is found in the mitochondrion matrix. Its function is as follows. Required for anchoring dihydrolipoamide dehydrogenase (E3) to the dihydrolipoamide transacetylase (E2) core of the pyruvate dehydrogenase complexes of eukaryotes. This specific binding is essential for a functional PDH complex. The sequence is that of Pyruvate dehydrogenase complex protein X component, mitochondrial (PDX1) from Saccharomyces cerevisiae (strain ATCC 204508 / S288c) (Baker's yeast).